Reading from the N-terminus, the 79-residue chain is RNA-binding protein KhpA (79 aa).

Residues 32-79 (FLEYHLNLDQSDVGRVIGRKGRTISAIRTIVYSVPTEYKKVRIVIDEK) form the KH domain.

The protein belongs to the KhpA RNA-binding protein family. As to quaternary structure, forms a complex with KhpB. KhpA and KhpB colocalize throughout the cell cycle, with some increase at midcell in dividing cells.

Its subcellular location is the cytoplasm. Functionally, a probable RNA chaperone. Forms a complex with KhpB which presumably binds to about 170 cellular RNAs (mRNA, tRNA intergenic RNA and sRNAs); the proteins alone each bind the same set of RNAs. A mutation in this gene suppresses the requirement for PBP2b (penA, a transpeptidase) in peripheral peptidoglycan (PG) synthesis. Probably plays a role in PG homeostasis and regulating peripheral PG synthesis. The sequence is that of RNA-binding protein KhpA from Streptococcus pneumoniae serotype 2 (strain D39 / NCTC 7466).